Here is a 341-residue protein sequence, read N- to C-terminus: 4-amino-5-hydroxymethyl-2-methylpyrimidine phosphate synthase (341 aa).

Position 62 is an N6-(pyridoxal phosphate)lysine (Lys-62). His-66 is a catalytic residue. Residue 115 to 118 coordinates pyridoxal 5'-phosphate; sequence GEFG. A CCCFC; essential for catalytic activity, may be the site of iron coordination motif is present at residues 195-199; sequence CCCFC.

It belongs to the NMT1/THI5 family. Homodimer. Requires Fe cation as cofactor.

It catalyses the reaction N(6)-(pyridoxal phosphate)-L-lysyl-[4-amino-5-hydroxymethyl-2-methylpyrimidine phosphate synthase] + L-histidyl-[4-amino-5-hydroxymethyl-2-methylpyrimidine phosphate synthase] + 2 Fe(3+) + 4 H2O = L-lysyl-[4-amino-5-hydroxymethyl-2-methylpyrimidine phosphate synthase] + (2S)-2-amino-5-hydroxy-4-oxopentanoyl-[4-amino-5-hydroxymethyl-2-methylpyrimidine phosphate synthase] + 4-amino-2-methyl-5-(phosphooxymethyl)pyrimidine + 3-oxopropanoate + 2 Fe(2+) + 2 H(+). It functions in the pathway cofactor biosynthesis; thiamine diphosphate biosynthesis. Its function is as follows. Responsible for the formation of the pyrimidine heterocycle in the thiamine biosynthesis pathway. Catalyzes the formation of hydroxymethylpyrimidine phosphate (HMP-P) from histidine and pyridoxal phosphate (PLP). The protein uses PLP and the active site histidine to form HMP-P, generating an inactive enzyme. The enzyme can only undergo a single turnover, which suggests it is a suicide enzyme. This chain is 4-amino-5-hydroxymethyl-2-methylpyrimidine phosphate synthase, found in Uromyces fabae (Rust fungus).